A 211-amino-acid polypeptide reads, in one-letter code: Envelope protein UL45 homolog (211 aa).

Topologically, residues 1 to 46 (MMSPTPEDDRDLVVVRGRLRMMDNGAEHDRERRSYTAWPHLCCGCT) are intravirion. A helical; Signal-anchor for type II membrane protein membrane pass occupies residues 47–67 (IGIILTMFVIATTLLLASLFA). Residues 68-211 (FSYMSLESGT…SSILSNAIMK (144 aa)) are Virion surface-facing. 2 N-linked (GlcNAc...) asparagine; by host glycosylation sites follow: Asn-96 and Asn-133.

It belongs to the herpesviridae HHV-1 UL45 family.

Its subcellular location is the virion membrane. The chain is Envelope protein UL45 homolog (UL45H) from Gallid herpesvirus 2 (strain bc-1) (GaHV-2).